A 231-amino-acid polypeptide reads, in one-letter code: Fibronectin type III domain-containing protein 4 (231 aa).

The signal sequence occupies residues 1-40 (MPLAPPANSVETMASLMPLSPYLSPTVLLLVSCDLGFVRA). Residues 41-163 (DRPPSPVNVT…GLDGERPLQT (123 aa)) lie on the Extracellular side of the membrane. The region spanning 43–136 (PPSPVNVTVT…PRVHFRTLKG (94 aa)) is the Fibronectin type-III domain. Residues N48 and N143 are each glycosylated (N-linked (GlcNAc...) asparagine). The tract at residues 118–156 (GLRGESPPGPRVHFRTLKGSDRLPSNSSSPGDITVEGLD) is disordered. Residues 164–184 (GEVVIIVVVLLMWAAVIGLFC) form a helical membrane-spanning segment. Topologically, residues 185 to 231 (RQYDIIKDNDSNNNPKEKGKGPEQSPQGRPVGTTRQKKSPSINTIDV) are cytoplasmic. The span at 193-205 (NDSNNNPKEKGKG) shows a compositional bias: basic and acidic residues. Residues 193 to 231 (NDSNNNPKEKGKGPEQSPQGRPVGTTRQKKSPSINTIDV) form a disordered region.

Predominantly expressed in the liver and in the brain, including in the cortex, hypothalamus and hippocampus. Also expressed in heart, lung, kidney and testis. In the colon, expressed in the epithelium and in a subset of immune cells in lymphoid aggregates.

It localises to the membrane. The protein resides in the secreted. Functionally, has anti-inflammatory properties. In the colon, acts on macrophages to down-regulate inflammation. May suppress osteoclastogenesis and mature osteoclast resorptive function. In white adipose tissue, decreases local inflammation, via interaction with GPR116. Also required for proper systemic glucose tolerance, specifically sensitizing white adipocytes to insulin and promoting glucose uptake. The insulin sensitizing function in adipose tissue is mediated by interaction with ADGRF5/GPR116 and activation of cAMP signaling. In Mus musculus (Mouse), this protein is Fibronectin type III domain-containing protein 4 (Fndc4).